Here is a 64-residue protein sequence, read N- to C-terminus: Disintegrin CV-11-beta (64 aa).

Residues 1–64 (NSAHPCCDPV…SDCPRNPWKD (64 aa)) enclose the Disintegrin domain. Disulfide bonds link Cys-6/Cys-29, Cys-20/Cys-26, Cys-25/Cys-50, and Cys-38/Cys-57. Positions 42-44 (RGD) match the Cell attachment site motif.

It belongs to the disintegrin family. Dimeric disintegrin subfamily. In terms of assembly, heterodimer with subunit alpha; disulfide-linked. In terms of tissue distribution, expressed by the venom gland.

It localises to the secreted. Its function is as follows. Inhibits ADP-induced human platelet aggregation. Antagonist of alpha-IIb/beta-3 (ITGA2B/ITGB3). The sequence is that of Disintegrin CV-11-beta from Cerastes vipera (Sahara sand viper).